We begin with the raw amino-acid sequence, 382 residues long: Mannitol-1-phosphate 5-dehydrogenase (382 aa).

3–14 (ALHFGAGNIGRG) lines the NAD(+) pocket. Position 269 is an N6-acetyllysine (lysine 269).

This sequence belongs to the mannitol dehydrogenase family.

The enzyme catalyses D-mannitol 1-phosphate + NAD(+) = beta-D-fructose 6-phosphate + NADH + H(+). In Escherichia coli O17:K52:H18 (strain UMN026 / ExPEC), this protein is Mannitol-1-phosphate 5-dehydrogenase.